The primary structure comprises 314 residues: Olfactory receptor 5B3 (314 aa).

Residues 1 to 23 are Extracellular-facing; it reads MENKTEVTQFILLGLTNDSELQV. Residues N3 and N17 are each glycosylated (N-linked (GlcNAc...) asparagine). A helical membrane pass occupies residues 24-44; that stretch reads PLFITFPFIYIITLVGNLGII. The Cytoplasmic portion of the chain corresponds to 45 to 52; it reads VLIFWDSC. The helical transmembrane segment at 53 to 73 threads the bilayer; the sequence is LHNPMYFFLSNLSLVDFCYSS. Topologically, residues 74 to 97 are extracellular; sequence AVTPIVMAGFLIEDKVISYNACAA. An intrachain disulfide couples C95 to C187. A helical membrane pass occupies residues 98–118; sequence QMYIFVAFATVENYLLASMAY. The Cytoplasmic segment spans residues 119–131; the sequence is DRYAAVCKPLHYT. Residues 132–152 traverse the membrane as a helical segment; the sequence is TTMTTTVCARLAIGSYLCGFL. N153 carries an N-linked (GlcNAc...) asparagine glycan. Residues 153–194 lie on the Extracellular side of the membrane; the sequence is NASIHTGDTFSLSFCKSNEVHHFFCDIPAVMVLSCSDRHISE. A helical transmembrane segment spans residues 195-215; it reads LVLIYVVSFNIFIALLVILIS. At 216–235 the chain is on the cytoplasmic side; it reads YTFIFITILKMHSASVYQKP. A helical membrane pass occupies residues 236 to 256; it reads LSTCASHFIAVGIFYGTIIFM. Residues 257–269 lie on the Extracellular side of the membrane; sequence YLQPSSSHSMDTD. A helical transmembrane segment spans residues 270 to 290; it reads KMAPVFYTMVIPMLNPLVYSL. Residues 291–314 lie on the Cytoplasmic side of the membrane; sequence RNKEVKSAFKKVVEKAKLSVGWSV.

It belongs to the G-protein coupled receptor 1 family.

The protein localises to the cell membrane. Functionally, odorant receptor. This chain is Olfactory receptor 5B3 (OR5B3), found in Homo sapiens (Human).